We begin with the raw amino-acid sequence, 251 residues long: Outer membrane protein assembly factor BamD (251 aa).

The N-terminal stretch at 1-19 is a signal peptide; the sequence is MKLTKLLSALLVIGLVLGG. C20 carries the N-palmitoyl cysteine lipid modification. Residue C20 is the site of S-diacylglycerol cysteine attachment. TPR repeat units lie at residues 33–66, 70–103, and 166–199; these read IATL…HPGN, PQAE…HPAN, and AGKE…YQTT.

The protein belongs to the BamD family. As to quaternary structure, part of the Bam complex.

Its subcellular location is the cell outer membrane. Part of the outer membrane protein assembly complex, which is involved in assembly and insertion of beta-barrel proteins into the outer membrane. This chain is Outer membrane protein assembly factor BamD, found in Rickettsia prowazekii (strain Madrid E).